The following is a 421-amino-acid chain: MGMTITEKILAAHAGLKAVEPGQLINAKVDLALGNDITAPLAIQEFKKLGVKKVFDPERVVLVPDHFTPAKDIKSAEQAKILRDFAREQGLTHYFEIGRMGIEHCLLPEAGLVGPGDLVIGADSHTCTYGALGAFATGVGSTDLAAAMATGELWFKVPETILFRYHGKLKPWVGGKDLILYTIGRIGVDGARYMAMEFTGEAITNLSMEGRFTMANMAIEAGGKNGIFPVDEKTVEYIRGRLQRDYRIYQSDPDARYNQEIDIDASKIEPQVALPHLPENARSVKEIGEIKIDQVVIGSCTNGRLEDLRVAAQILKGQKVHPEVRLIVIPGTQQIYAAALAEGLIATFIEAGAAVSTPTCGPCLGGHMGILAKGERALATTNRNFVGRMGHPESEVYLAGPAVAAASAVKGRIAAPEEVVK.

[4Fe-4S] cluster is bound by residues Cys300, Cys360, and Cys363.

It belongs to the aconitase/IPM isomerase family. LeuC type 2 subfamily. In terms of assembly, heterodimer of LeuC and LeuD. It depends on [4Fe-4S] cluster as a cofactor.

It carries out the reaction (2R,3S)-3-isopropylmalate = (2S)-2-isopropylmalate. It participates in amino-acid biosynthesis; L-leucine biosynthesis; L-leucine from 3-methyl-2-oxobutanoate: step 2/4. Catalyzes the isomerization between 2-isopropylmalate and 3-isopropylmalate, via the formation of 2-isopropylmaleate. The chain is 3-isopropylmalate dehydratase large subunit from Moorella thermoacetica (strain ATCC 39073 / JCM 9320).